A 459-amino-acid polypeptide reads, in one-letter code: Cysteine--tRNA ligase (459 aa).

Cysteine 28 contacts Zn(2+). The short motif at 30 to 40 (VTVYDLCHFGH) is the 'HIGH' region element. 3 residues coordinate Zn(2+): cysteine 209, histidine 234, and glutamate 238. The short motif at 266 to 270 (KMSKS) is the 'KMSKS' region element. Lysine 269 is a binding site for ATP.

It belongs to the class-I aminoacyl-tRNA synthetase family. Monomer. The cofactor is Zn(2+).

Its subcellular location is the cytoplasm. It carries out the reaction tRNA(Cys) + L-cysteine + ATP = L-cysteinyl-tRNA(Cys) + AMP + diphosphate. The sequence is that of Cysteine--tRNA ligase from Actinobacillus pleuropneumoniae serotype 5b (strain L20).